We begin with the raw amino-acid sequence, 1776 residues long: MAAAPSELLPLPPPATPGSYRLLSRCRPYAPGTDGRRSGGTMRGEKNYYCRGAAGDHGSCPATPSPLASTLLLPAEAVSTSWSGPGSGLSGGDEEETRLLQLLRTAPDPSEAFQALQAALPRRGGRLGFPRRKEALYRALGRVLVEGGSEEKRLCLQLLSDVLRGQGEAGQLEEAFSLALLPQLVVSLREDNPALRKDALQILHICLRRSSGQVLRTLIQGLESPDARLRASTALLLPILFTPEDLLQGLDLTEVIISLARKLGDQEMEEESETAFSSLQQIGERLGQERFHSYISRLPSALRRHYNRRLESQYGSQVPYYLELEASGFSEDAAPCVVNLSSSNLKFEIIPQELHARLLDQEDYKNRTQAVEELKQLLGKFNPSSTPHASLVGFISLLYNLLDDSNFKVVHGTLQVLHLLVIRLGEQVQQFLGPVIAASVKVLADNKLVIKQEYMKIFLKLMKEVGPQRVLSLLLENLKHKHSRVREEVVNICICSLLTYPSEDFDLPKLSFDLAPALVDSKRRVRQAALEAFAVLASSMGSGKTNVLFKAVDTVELQDNGDGVMNAVQARLARKTLPRLTEQGFVEYAILMPSSAQGRSSHLAHGADTDWLMSGNRTQSAHCYCGDHTRDSMQLYGSYSPTICTRRVLSAGKGKNKLPWENEQPGVMGENQTSNSKDIKDTEQFSAHDLIPSPKLKPSQGMPASDDLCFSKKRSSRNLFQSSRDFNSESVPTCGAGNTADLQTNLPGKCGQLGLSQIGCRTGSVGSDLQFLGTANGHQDKVYASIDFGSKTQQTFGSQSERTSSYSGSNASPGSFILPSYPLASPRTSPKHTSPLSVAPKKSQDNSISFSNSWPLKSFEGLSKPSPQKKLANQKSSDPTGENFQEKTTAVQLTPALVRSPSSRRGLNGTKPVPPIPRGINLLPDKADLSTMGHMKKQPDDIWKSEKDNLTIDLSELNFRDKDLDQEEMHSSLRSLRNSAAKKRAKLSGSSSTSDVDSPDSAMKLELTIDSPSRASSPNISSYSESGVYSQESLTSSLSTTPQGKRIMSDIFPTFGSKPCSTRLSSAKKTSHAAEQSPSAGFTRSSNLQQISSFDFTSTNTLSEDSVVIVGKGVFGNPNSAPTTCSQPVISSVESEDTFPVKPSIEPPSGVYGRAVQHNAPLYPEVENDKDTKVSIAKSTYEKMRQKRKEEKELLDAKDCERKETNPWERIKHLGSEKMTSENEPSSGVIPQYKERMSSVTHSPEIMDSLELRPFSKPDIALTEALRLLADEDWEKKMEGLNFVRCLAAFHSDLLNTKLHETTFAVVQEVKNLRSGVSRAAVVCLGDLFTYLKKSMDQELDSAVRALLHKAGESNTFIREDVDKALKAMVNNVTPARAVTSLINGGQSHLHIAVRRCTAQHLADVVECMDPERISSGTKDMADRLLPAAAKFAQDSSQETRYYGRKMLFLMMGHPNFEKLLEKYIPSKDLPYIKESVKNLRLKGLGEIPLDTASAKGRRSHPGSVGNTRSSSVSRDAFSSSEREVTEVREVPRKSAPRNSLESAEYIKVITGLLNAKDFRDRINGIKQLLSDTENNQELVVGNIVKIFDAFKSRLHDSNSKVNLVALETMHKMIPLLRDNLSPIINMLIPAIVDNNLNSKNPGIYAAATNVVHALSQHVDNYLLLQPFCTKAQFLNGKAKQDMTEKLADIVTELYQRKPHATEQKVLVVLWHLLGNMTHSGSLPGAGGNIRTATAKLSKALFTQMGQNLLNQAASQPPHIKKSLEELLDVTVLSEL.

2 TOG regions span residues 94-311 (EEET…RRLE) and 351-595 (PQEL…MPSS). HEAT repeat units follow at residues 175 to 212 (AFSL…RSSG), 214 to 246 (VLRT…PEDL), 250 to 288 (LDLT…RLGQ), 344 to 383 (NLKF…KFNP), 389 to 426 (ASLV…RLGE), 430 to 465 (QFLG…MKEV), 466 to 503 (GPQR…YPSE), and 505 to 542 (FDLP…SMGS). 4 disordered regions span residues 655 to 676 (KNKL…TSNS), 817 to 921 (ILPS…RGIN), 970 to 1000 (HSSL…DSPD), and 1062 to 1084 (TRLS…GFTR). Polar residues-rich tracts occupy residues 826–836 (PRTSPKHTSPL), 845–855 (DNSISFSNSWP), and 871–892 (LANQ…TAVQ). Residues 988-1000 (SGSSSTSDVDSPD) show a composition bias toward low complexity. The segment at 1259 to 1481 (DIALTEALRL…YIKESVKNLR (223 aa)) is TOG 3. HEAT repeat units lie at residues 1297–1334 (TKLH…YLKK) and 1338–1375 (QELD…NVTP). The segment at 1493–1536 (ASAKGRRSHPGSVGNTRSSSVSRDAFSSSEREVTEVREVPRKSA) is disordered. Residues 1509 to 1520 (RSSSVSRDAFSS) show a composition bias toward low complexity. Positions 1521–1533 (SEREVTEVREVPR) are enriched in basic and acidic residues. A TOG 4 region spans residues 1540–1776 (SLESAEYIKV…LLDVTVLSEL (237 aa)). HEAT repeat units follow at residues 1541-1578 (LESA…NNQE), 1582-1619 (GNIV…LLRD), and 1623-1661 (PIIN…HVDN).

The protein belongs to the Crescerin family. Interacts with ARMC9. Interacts with CCDC66, CEP104 and CSPP1.

The protein resides in the cell projection. Its subcellular location is the cilium. It localises to the cytoplasm. It is found in the cytoskeleton. The protein localises to the cilium axoneme. Its function is as follows. Involved in ciliogenesis. It is required for appropriate acetylation and polyglutamylation of ciliary microtubules, and regulation of cilium length. Interacts with microtubules and promotes microtubule polymerization via its HEAT repeat domains, especially those in TOG region 2 and 4. The polypeptide is TOG array regulator of axonemal microtubules protein 1 (Togaram1) (Mus musculus (Mouse)).